The following is a 379-amino-acid chain: MTAAPASVRLFQTHEMEALRRDRRLDPQVFRKLRNDLLKKFESDEAVLEKYPVAEAIELHSLKLYQRMDSEIDGATKLLFETESGMLIESVILRIATGRTTLCVSSQIGCAAACDFCATGKMGIAKNLATEEILDQVVQAGQILRGEDRRLSNIVFMGMGEPLHNEVNVTEAIELLTAPDHFARSPSTVLVSTVGVPAGMLRLAKRFPNLNLALSLHSADQTTREKIIPLGKKASLAQLHDAIHEIQTIQDREFMIEYLMLRDVNDSAKDADRLIDWIGDLRVHVNLIPYNTIEASPHLHASSRPVIESFADILKASGLKTTVRYSLGNDIEAACGQLIRQENRQRAMQARRTESESDSHVGFLDVRQVVDGLESQKNK.

The active-site Proton acceptor is the glutamate 89. The Radical SAM core domain occupies 96 to 332 (ATGRTTLCVS…VRYSLGNDIE (237 aa)). Cysteine 103 and cysteine 335 are disulfide-bonded. Residues cysteine 110, cysteine 114, and cysteine 117 each coordinate [4Fe-4S] cluster. S-adenosyl-L-methionine is bound by residues 160 to 161 (GE), serine 192, 215 to 217 (SLH), and asparagine 291. Cysteine 335 serves as the catalytic S-methylcysteine intermediate.

This sequence belongs to the radical SAM superfamily. RlmN family. [4Fe-4S] cluster serves as cofactor.

The protein resides in the cytoplasm. The sequence is that of Probable RNA methyltransferase RB6963 from Rhodopirellula baltica (strain DSM 10527 / NCIMB 13988 / SH1).